Consider the following 314-residue polypeptide: ATP synthase gamma chain (314 aa).

Belongs to the ATPase gamma chain family. In terms of assembly, F-type ATPases have 2 components, CF(1) - the catalytic core - and CF(0) - the membrane proton channel. CF(1) has five subunits: alpha(3), beta(3), gamma(1), delta(1), epsilon(1). CF(0) has three main subunits: a, b and c.

The protein localises to the cellular thylakoid membrane. In terms of biological role, produces ATP from ADP in the presence of a proton gradient across the membrane. The gamma chain is believed to be important in regulating ATPase activity and the flow of protons through the CF(0) complex. The polypeptide is ATP synthase gamma chain (Synechococcus sp. (strain JA-3-3Ab) (Cyanobacteria bacterium Yellowstone A-Prime)).